The sequence spans 160 residues: Endoribonuclease YbeY (160 aa).

Residues H118, H122, and H128 each coordinate Zn(2+).

This sequence belongs to the endoribonuclease YbeY family. The cofactor is Zn(2+).

It localises to the cytoplasm. Its function is as follows. Single strand-specific metallo-endoribonuclease involved in late-stage 70S ribosome quality control and in maturation of the 3' terminus of the 16S rRNA. The chain is Endoribonuclease YbeY from Treponema pallidum (strain Nichols).